The primary structure comprises 405 residues: Arginine biosynthesis bifunctional protein ArgJ (405 aa).

6 residues coordinate substrate: T152, K178, T189, E276, N400, and T405. T189 serves as the catalytic Nucleophile.

This sequence belongs to the ArgJ family. As to quaternary structure, heterotetramer of two alpha and two beta chains.

Its subcellular location is the cytoplasm. The catalysed reaction is N(2)-acetyl-L-ornithine + L-glutamate = N-acetyl-L-glutamate + L-ornithine. It carries out the reaction L-glutamate + acetyl-CoA = N-acetyl-L-glutamate + CoA + H(+). It functions in the pathway amino-acid biosynthesis; L-arginine biosynthesis; L-ornithine and N-acetyl-L-glutamate from L-glutamate and N(2)-acetyl-L-ornithine (cyclic): step 1/1. It participates in amino-acid biosynthesis; L-arginine biosynthesis; N(2)-acetyl-L-ornithine from L-glutamate: step 1/4. Catalyzes two activities which are involved in the cyclic version of arginine biosynthesis: the synthesis of N-acetylglutamate from glutamate and acetyl-CoA as the acetyl donor, and of ornithine by transacetylation between N(2)-acetylornithine and glutamate. This Pseudomonas fluorescens (strain ATCC BAA-477 / NRRL B-23932 / Pf-5) protein is Arginine biosynthesis bifunctional protein ArgJ.